Reading from the N-terminus, the 602-residue chain is MRLSQMLFVTLRDEPAEAEIPSHKLLLRAGYIRRIASGIYSYLPLMWRVLQKVSAIVREEMNRSGALECLLPQLQPAELWQESGRWDTYTKAEGIMFSLTDRAQRQLGLGPTHEEVITALAKDLIRSYRQLPVHLYQIQTKFRDEIRPRFGLMRGREFIMKDGYSFHADVASLKETYQVMYDTYSRILQRCGLTFRAVEADSGAIGGSGSHEFMVLAAAGEDEVLYTADGQYAANVEKAVSLPPDAVPTTYKTVATLDTPNAATIDALVEQLQCHPTQIVKNVLYRAVFDNGRVGLVLVSIRGDQEVNSVKLHNTLTSLAPNYGATKLLDLRLADAHTAQEWAATPIPFGYIGPDLEDAVIKADSQIIPQWIRIADRTVVELKRFITGANRDQQHRVGVNWGKSCPLPAIIADVRKAQAGDRACHDPTQHLEAARGIEIGHIFQLGTKYSEAMKATYTNEQGEEVPLVMGCYGIGISRLAQAAVEQHHDAQGIVWPLAIAPYQVIIVVPNIGDAQQMQAATDLYEQLQAAGIEVLLDDRDERAGVKFKDADLIGIPYRLVTGRAIANGEVELIIRATGAKSTLPLTEVVRYLQKEIAQQLAP.

Belongs to the class-II aminoacyl-tRNA synthetase family. ProS type 1 subfamily. In terms of assembly, homodimer.

It is found in the cytoplasm. It carries out the reaction tRNA(Pro) + L-proline + ATP = L-prolyl-tRNA(Pro) + AMP + diphosphate. Its function is as follows. Catalyzes the attachment of proline to tRNA(Pro) in a two-step reaction: proline is first activated by ATP to form Pro-AMP and then transferred to the acceptor end of tRNA(Pro). As ProRS can inadvertently accommodate and process non-cognate amino acids such as alanine and cysteine, to avoid such errors it has two additional distinct editing activities against alanine. One activity is designated as 'pretransfer' editing and involves the tRNA(Pro)-independent hydrolysis of activated Ala-AMP. The other activity is designated 'posttransfer' editing and involves deacylation of mischarged Ala-tRNA(Pro). The misacylated Cys-tRNA(Pro) is not edited by ProRS. In Thermosynechococcus vestitus (strain NIES-2133 / IAM M-273 / BP-1), this protein is Proline--tRNA ligase.